The following is a 283-amino-acid chain: Thymidylate synthase (283 aa).

Residue Arg22 coordinates dUMP. The Nucleophile role is filled by Cys160. DUMP is bound by residues 180–183, Asn191, and 221–223; these read RSCD and HIY. Asp183 lines the (6R)-5,10-methylene-5,6,7,8-tetrahydrofolate pocket. Residue Ser282 coordinates (6R)-5,10-methylene-5,6,7,8-tetrahydrofolate.

This sequence belongs to the thymidylate synthase family. Bacterial-type ThyA subfamily. As to quaternary structure, homodimer.

It localises to the cytoplasm. It catalyses the reaction dUMP + (6R)-5,10-methylene-5,6,7,8-tetrahydrofolate = 7,8-dihydrofolate + dTMP. It participates in pyrimidine metabolism; dTTP biosynthesis. Functionally, catalyzes the reductive methylation of 2'-deoxyuridine-5'-monophosphate (dUMP) to 2'-deoxythymidine-5'-monophosphate (dTMP) while utilizing 5,10-methylenetetrahydrofolate (mTHF) as the methyl donor and reductant in the reaction, yielding dihydrofolate (DHF) as a by-product. This enzymatic reaction provides an intracellular de novo source of dTMP, an essential precursor for DNA biosynthesis. This is Thymidylate synthase from Shewanella sediminis (strain HAW-EB3).